Consider the following 379-residue polypeptide: Anhydro-N-acetylmuramic acid kinase (379 aa).

9 to 16 (GTSADGVD) contributes to the ATP binding site.

Belongs to the anhydro-N-acetylmuramic acid kinase family.

The enzyme catalyses 1,6-anhydro-N-acetyl-beta-muramate + ATP + H2O = N-acetyl-D-muramate 6-phosphate + ADP + H(+). It participates in amino-sugar metabolism; 1,6-anhydro-N-acetylmuramate degradation. Its pathway is cell wall biogenesis; peptidoglycan recycling. Functionally, catalyzes the specific phosphorylation of 1,6-anhydro-N-acetylmuramic acid (anhMurNAc) with the simultaneous cleavage of the 1,6-anhydro ring, generating MurNAc-6-P. Is required for the utilization of anhMurNAc either imported from the medium or derived from its own cell wall murein, and thus plays a role in cell wall recycling. This chain is Anhydro-N-acetylmuramic acid kinase, found in Prochlorococcus marinus (strain MIT 9303).